Consider the following 231-residue polypeptide: Very-long-chain (3R)-3-hydroxyacyl-CoA dehydratase 4 (231 aa).

Over 1-19 (MGPVALPTWLQPRYRKNAY) the chain is Cytoplasmic. The helical transmembrane segment at 20–40 (LFIYYLIQFCGHSWIFTNMTV) threads the bilayer. Residues 41–56 (RFFSFGKDSMVDTFYA) lie on the Lumenal side of the membrane. Residues 57–77 (IGLVMQLCQSISLLELLHIYV) traverse the membrane as a helical segment. Over 78 to 112 (GIESNHLLPRILQLTERIIVLFMVITSQEEVQEKY) the chain is Cytoplasmic. Residues 113 to 133 (VVCVLFIFRNLLDMVRYTYSM) traverse the membrane as a helical segment. Topologically, residues 134–135 (LS) are lumenal. Residues 136-156 (VIGISYAVLTWFSQTLWMPIY) traverse the membrane as a helical segment. Residue Tyr-156 is part of the active site. Residue Pro-157 is a topological domain, cytoplasmic. The chain crosses the membrane as a helical span at residues 158–178 (LCVLAEAFTIYQSLPYFESFG). The active site involves Glu-163. The Lumenal portion of the chain corresponds to 179–189 (TYSTKLPFDLS). The chain crosses the membrane as a helical span at residues 190–210 (FYFPYVLKIYLMMLFVGMYFT). Residues 211–231 (YNHLYSERRDILRVFPNKKKM) lie on the Cytoplasmic side of the membrane.

The protein belongs to the very long-chain fatty acids dehydratase HACD family. In terms of assembly, may interact with enzymes of the ELO family (including ELOVL1); with those enzymes that mediate condensation, the first of the four steps of the reaction cycle responsible for fatty acids elongation, may be part of a larger fatty acids elongase complex.

It is found in the endoplasmic reticulum membrane. The enzyme catalyses a very-long-chain (3R)-3-hydroxyacyl-CoA = a very-long-chain (2E)-enoyl-CoA + H2O. It catalyses the reaction (3R)-hydroxyhexadecanoyl-CoA = (2E)-hexadecenoyl-CoA + H2O. Its pathway is lipid metabolism; fatty acid biosynthesis. Catalyzes the third of the four reactions of the long-chain fatty acids elongation cycle. This endoplasmic reticulum-bound enzymatic process, allows the addition of two carbons to the chain of long- and very long-chain fatty acids/VLCFAs per cycle. This enzyme catalyzes the dehydration of the 3-hydroxyacyl-CoA intermediate into trans-2,3-enoyl-CoA, within each cycle of fatty acid elongation. Thereby, it participates in the production of VLCFAs of different chain lengths that are involved in multiple biological processes as precursors of membrane lipids and lipid mediators. This is Very-long-chain (3R)-3-hydroxyacyl-CoA dehydratase 4 from Bos taurus (Bovine).